The chain runs to 54 residues: Secreted virulence factor MC69 (54 aa).

The first 18 residues, 1–18 (MKFTLALLTTLCASLASA), serve as a signal peptide directing secretion. Cysteine 38 and cysteine 48 form a disulfide bridge.

It belongs to the MC69 virulence factor family.

Its subcellular location is the secreted. Secreted protein required for appressorial penetration of intact host epidermal cells and for pathogenicity. In Colletotrichum orbiculare (strain 104-T / ATCC 96160 / CBS 514.97 / LARS 414 / MAFF 240422) (Cucumber anthracnose fungus), this protein is Secreted virulence factor MC69.